The chain runs to 89 residues: Small ribosomal subunit protein uS17 (89 aa).

Belongs to the universal ribosomal protein uS17 family. As to quaternary structure, part of the 30S ribosomal subunit.

In terms of biological role, one of the primary rRNA binding proteins, it binds specifically to the 5'-end of 16S ribosomal RNA. This chain is Small ribosomal subunit protein uS17, found in Xylella fastidiosa (strain 9a5c).